A 724-amino-acid polypeptide reads, in one-letter code: 1,4-alpha-glucan branching enzyme GlgB 1 (724 aa).

Asp403 acts as the Nucleophile in catalysis. Glu456 serves as the catalytic Proton donor.

The protein belongs to the glycosyl hydrolase 13 family. GlgB subfamily. Monomer.

It catalyses the reaction Transfers a segment of a (1-&gt;4)-alpha-D-glucan chain to a primary hydroxy group in a similar glucan chain.. Its pathway is glycan biosynthesis; glycogen biosynthesis. In terms of biological role, catalyzes the formation of the alpha-1,6-glucosidic linkages in glycogen by scission of a 1,4-alpha-linked oligosaccharide from growing alpha-1,4-glucan chains and the subsequent attachment of the oligosaccharide to the alpha-1,6 position. This chain is 1,4-alpha-glucan branching enzyme GlgB 1 (glgB1), found in Xanthomonas axonopodis pv. citri (strain 306).